We begin with the raw amino-acid sequence, 970 residues long: Protein translocase subunit SecA (970 aa).

ATP is bound by residues Q99, 117 to 121, and D631; that span reads GEGKT.

It belongs to the SecA family. Monomer and homodimer. Part of the essential Sec protein translocation apparatus which comprises SecA, SecYEG and auxiliary proteins SecDF. Other proteins may also be involved.

It localises to the cell inner membrane. The protein localises to the cytoplasm. The catalysed reaction is ATP + H2O + cellular proteinSide 1 = ADP + phosphate + cellular proteinSide 2.. Its function is as follows. Part of the Sec protein translocase complex. Interacts with the SecYEG preprotein conducting channel. Has a central role in coupling the hydrolysis of ATP to the transfer of proteins into and across the cell membrane, serving as an ATP-driven molecular motor driving the stepwise translocation of polypeptide chains across the membrane. This Chlamydia caviae (strain ATCC VR-813 / DSM 19441 / 03DC25 / GPIC) (Chlamydophila caviae) protein is Protein translocase subunit SecA.